We begin with the raw amino-acid sequence, 111 residues long: Disintegrin Eo1 subunit 1 (111 aa).

Positions 1-20 (MIQVLLVIICLAVFPYQGSS) are cleaved as a signal peptide. A propeptide spanning residues 21–46 (IILESGNVNDFELVYPKKVTVLPTGA) is cleaved from the precursor. Residues 26–111 (GNVNDFELVY…SDCPRNPWKD (86 aa)) form the Disintegrin domain. 4 disulfides stabilise this stretch: cysteine 53/cysteine 76, cysteine 67/cysteine 73, cysteine 72/cysteine 97, and cysteine 85/cysteine 104. The Cell attachment site; atypical (WGD) motif lies at 89 to 91 (WGD). Residues 110 to 111 (KD) constitute a propeptide that is removed on maturation.

The protein belongs to the disintegrin family. Dimeric disintegrin subfamily. As to quaternary structure, heterodimer; disulfide-linked. Expressed by the venom gland.

The protein resides in the secreted. In terms of biological role, poor inhibitor of platelet aggregation. The disintegrin inhibits the adhesion of cells expressing the RGD-dependent integrin alpha-5/beta-1 (ITGA5/ITGB1) to immobilized fibronectin. Inhibition on alpha-IIb/beta-3 (ITGA2B/ITGB3) is low. In Echis ocellatus (Ocellated saw-scaled viper), this protein is Disintegrin Eo1 subunit 1.